Consider the following 181-residue polypeptide: Large ribosomal subunit protein uL5 (181 aa).

The protein belongs to the universal ribosomal protein uL5 family. In terms of assembly, part of the 50S ribosomal subunit; part of the 5S rRNA/L5/L18/L25 subcomplex. Contacts the 5S rRNA and the P site tRNA. Forms a bridge to the 30S subunit in the 70S ribosome.

Its function is as follows. This is one of the proteins that bind and probably mediate the attachment of the 5S RNA into the large ribosomal subunit, where it forms part of the central protuberance. In the 70S ribosome it contacts protein S13 of the 30S subunit (bridge B1b), connecting the 2 subunits; this bridge is implicated in subunit movement. Contacts the P site tRNA; the 5S rRNA and some of its associated proteins might help stabilize positioning of ribosome-bound tRNAs. This Sulfurovum sp. (strain NBC37-1) protein is Large ribosomal subunit protein uL5.